The chain runs to 862 residues: Eukaryotic translation initiation factor 3 subunit C (862 aa).

A disordered region spans residues 1 to 81; that stretch reads MSSRFFYGGG…EEEEKVTVVK (81 aa). A compositionally biased stretch (acidic residues) spans 17–54; sequence SSDEEELYSDREEEEKSEEEESSEEEDETSEEEESDEE. Residues 55 to 65 show a composition bias toward basic and acidic residues; it reads TGAKKFLKDVA. The segment covering 66-75 has biased composition (acidic residues); the sequence is SDSEEEEEEE. Positions 600-774 constitute a PCI domain; the sequence is FHMHINLELL…NAIVFRKGVE (175 aa). A disordered region spans residues 813–862; that stretch reads RDQGAGARGGRGSGRGGQARGGPRFPGGQQGRRPGGQQFGGGALGGAIKA. A compositionally biased stretch (gly residues) spans 818 to 862; the sequence is GARGGRGSGRGGQARGGPRFPGGQQGRRPGGQQFGGGALGGAIKA.

The protein belongs to the eIF-3 subunit C family. In terms of assembly, component of the eukaryotic translation initiation factor 3 (eIF-3) complex.

It is found in the cytoplasm. Functionally, component of the eukaryotic translation initiation factor 3 (eIF-3) complex, which is involved in protein synthesis of a specialized repertoire of mRNAs and, together with other initiation factors, stimulates binding of mRNA and methionyl-tRNAi to the 40S ribosome. The eIF-3 complex specifically targets and initiates translation of a subset of mRNAs involved in cell proliferation. This is Eukaryotic translation initiation factor 3 subunit C (nip1) from Neosartorya fischeri (strain ATCC 1020 / DSM 3700 / CBS 544.65 / FGSC A1164 / JCM 1740 / NRRL 181 / WB 181) (Aspergillus fischerianus).